Here is a 261-residue protein sequence, read N- to C-terminus: MEMO1 family protein AF_2310 (261 aa).

Belongs to the MEMO1 family.

This chain is MEMO1 family protein AF_2310, found in Archaeoglobus fulgidus (strain ATCC 49558 / DSM 4304 / JCM 9628 / NBRC 100126 / VC-16).